The sequence spans 816 residues: Leucine--tRNA ligase (816 aa).

The 'HIGH' region motif lies at 40-51; the sequence is SYPSGSQLHAGH. The short motif at 576–580 is the 'KMSKS' region element; the sequence is KMSKS. Lys-579 serves as a coordination point for ATP.

It belongs to the class-I aminoacyl-tRNA synthetase family.

It localises to the cytoplasm. It carries out the reaction tRNA(Leu) + L-leucine + ATP = L-leucyl-tRNA(Leu) + AMP + diphosphate. The polypeptide is Leucine--tRNA ligase (Clostridium perfringens (strain ATCC 13124 / DSM 756 / JCM 1290 / NCIMB 6125 / NCTC 8237 / Type A)).